Here is a 469-residue protein sequence, read N- to C-terminus: Protein POLLENLESS 3-LIKE 1 (469 aa).

The interval 1–20 (MRRRESRGAKGGGFLTPPPS) is disordered. TPR repeat units lie at residues 88 to 121 (DSAL…CPFE), 124 to 157 (DSID…LEQD), and 184 to 217 (ARIL…EPDN). Positions 139–191 (RITEVAELLEHKLRTLEQDKHYGGRIKIAKRSHEEQNNKTIEQEKARILGNLA) form a coiled coil. Polar residues predominate over residues 314–338 (NIHKTNSHASSESVEQNSPGLTTQP). Residues 314-339 (NIHKTNSHASSESVEQNSPGLTTQPR) form a disordered region.

The protein belongs to the MS5 protein family. Expressed in floral and vegetative organs. Also barely detectable in leaves and stems.

The protein resides in the nucleus. Its function is as follows. Probably involved in the regulation of cell division. The chain is Protein POLLENLESS 3-LIKE 1 from Arabidopsis thaliana (Mouse-ear cress).